Reading from the N-terminus, the 183-residue chain is ATP-dependent protease subunit HslV (183 aa).

Thr13 is a catalytic residue. Na(+)-binding residues include Gly168, Cys171, and Thr174.

It belongs to the peptidase T1B family. HslV subfamily. As to quaternary structure, a double ring-shaped homohexamer of HslV is capped on each side by a ring-shaped HslU homohexamer. The assembly of the HslU/HslV complex is dependent on binding of ATP.

The protein localises to the cytoplasm. The enzyme catalyses ATP-dependent cleavage of peptide bonds with broad specificity.. With respect to regulation, allosterically activated by HslU binding. Protease subunit of a proteasome-like degradation complex believed to be a general protein degrading machinery. The protein is ATP-dependent protease subunit HslV of Stenotrophomonas maltophilia (strain R551-3).